A 298-amino-acid polypeptide reads, in one-letter code: Lipoyl synthase 1 (298 aa).

[4Fe-4S] cluster-binding residues include Cys-34, Cys-39, Cys-45, Cys-60, Cys-64, Cys-67, and Ser-274. The region spanning 46–263 (FKAGTATFLI…RRAGEGMGFL (218 aa)) is the Radical SAM core domain. The tract at residues 277–298 (AEQVQRLMRSHPRTPKNQHSPE) is disordered.

Belongs to the radical SAM superfamily. Lipoyl synthase family. Requires [4Fe-4S] cluster as cofactor.

The protein localises to the cytoplasm. It catalyses the reaction [[Fe-S] cluster scaffold protein carrying a second [4Fe-4S](2+) cluster] + N(6)-octanoyl-L-lysyl-[protein] + 2 oxidized [2Fe-2S]-[ferredoxin] + 2 S-adenosyl-L-methionine + 4 H(+) = [[Fe-S] cluster scaffold protein] + N(6)-[(R)-dihydrolipoyl]-L-lysyl-[protein] + 4 Fe(3+) + 2 hydrogen sulfide + 2 5'-deoxyadenosine + 2 L-methionine + 2 reduced [2Fe-2S]-[ferredoxin]. Its pathway is protein modification; protein lipoylation via endogenous pathway; protein N(6)-(lipoyl)lysine from octanoyl-[acyl-carrier-protein]: step 2/2. Its function is as follows. Catalyzes the radical-mediated insertion of two sulfur atoms into the C-6 and C-8 positions of the octanoyl moiety bound to the lipoyl domains of lipoate-dependent enzymes, thereby converting the octanoylated domains into lipoylated derivatives. The protein is Lipoyl synthase 1 of Gloeobacter violaceus (strain ATCC 29082 / PCC 7421).